The sequence spans 876 residues: MKKLKASEIRQKYLDFFVEKGHMVEPSAPLVPIDDDTLLWINSGVATLKKYFDGRETPKKPRIVNSQKAIRTNDIENVGFTARHHTFFEMLGNFSIGDYFKQEAIEFAWEFLTSDKWMGMEPDKLYVTIHPEDMEAYNIWHKDIGLEESRIIRIEGNFWDIGEGPSGPNTEIFYDRGEAYGQDDPAEEMYPGGENERYLEVWNLVFSEFNHNKDHSYTPLPNKNIDTGMGLERMASVSQNVRTNYETDLFMPIMNEIEKVSGKQYLVNNEQDVAFKVIADHIRTIAFAISDGALPANEGRGYVLRRLLRRAVRFSQTLGINEPFMYKLVDIVADIMEPYYPNVKEKADFIKRVIKSEEERFHETLEDGLAILNELIKKAKATTNEINGKDAFKLYDTYGFPIELTEEIAVQAGLKVDMTTFESEMQQQRDRARQARQNSQSMQVQSEVLKNITSASTFVGYDTATAQTTLTHLIYNGEEVSQVEAGETVYFMLTETPFYAVSGGQVADTGIVYNDNFEIAVSEVTKAPNGQNLHKGVVQFGQVNVGATVSAEVNQNDRRDIQKNHSATHLLHAALKSVLGDHVNQAGSLVEADRLRFDFSHFGPMTNDEIDQVERLVNEEIWKGIDVNIQEMDIASAKEMGAMALFGEKYGDVVRVVNMAPFSIELCGGIHVRNTSEIGLFKIVSESGTGAGVRRIEALTGKAAFLYLEDIQEKFNTMKSQMKVKSDDQVVEKLTQLQDEEKALLKQLEQRDKEITSLKMGNIEDQVEEINGYKVLVTEVDVPNAKAIRSTMDDFKSKLQDTIIILASNVDDKVSMVATVPKSLTNNVKAGDLIKQMAPIVGGKGGGRPDMAQGGGTQPENISKSLSFIKDYIKNL.

4 residues coordinate Zn(2+): His565, His569, Cys667, and His671.

It belongs to the class-II aminoacyl-tRNA synthetase family. Zn(2+) serves as cofactor.

Its subcellular location is the cytoplasm. It carries out the reaction tRNA(Ala) + L-alanine + ATP = L-alanyl-tRNA(Ala) + AMP + diphosphate. Its function is as follows. Catalyzes the attachment of alanine to tRNA(Ala) in a two-step reaction: alanine is first activated by ATP to form Ala-AMP and then transferred to the acceptor end of tRNA(Ala). Also edits incorrectly charged Ser-tRNA(Ala) and Gly-tRNA(Ala) via its editing domain. The protein is Alanine--tRNA ligase of Staphylococcus aureus (strain Mu3 / ATCC 700698).